The primary structure comprises 54 residues: Conotoxin Cal6.17 (54 aa).

A signal peptide spans 1–19; it reads MSGTGVLLLTLLLLVTMAT. Intrachain disulfides connect Cys-24/Cys-39, Cys-32/Cys-49, and Cys-38/Cys-53.

As to expression, expressed by the venom duct.

It is found in the secreted. Functionally, probable neurotoxin. This is Conotoxin Cal6.17 from Californiconus californicus (California cone).